The following is a 132-amino-acid chain: Movement protein TGB3 (132 aa).

Over 1–11 (MVLVVKVDLSN) the chain is Cytoplasmic. A helical membrane pass occupies residues 12–32 (IVLYIVAGCVVVSMLYSPFFS). The Lumenal segment spans residues 33-109 (NDVKASSYAG…TETLFIILSR (77 aa)). Residues 110–130 (LFGLAVFLFMICLMSIVWFWC) form a helical membrane-spanning segment. Topologically, residues 131–132 (HR) are cytoplasmic.

This sequence belongs to the benyvirus TGB3 movement protein family. In terms of assembly, interacts with movement proteins TGB1 and TGB2.

The protein resides in the host cell junction. It is found in the host plasmodesma. The protein localises to the host endoplasmic reticulum membrane. Participates in the transport of viral RNA to the plasmodesmata. TGBp3 most probably contains signals of plasmodesmata targeting is therefore involved in the targeting of TGBp2, and viral RNAs-TGBp1 (RNP complex), to plasmodesmata. Can gate plasmodesmata and increase their size exclusion limit. This is Movement protein TGB3 from Beta macrocarpa (Beet).